A 107-amino-acid polypeptide reads, in one-letter code: Stellacyanin (107 aa).

The Phytocyanin domain maps to 1-105 (TVYTVGDSAG…GQKVHINVTV (105 aa)). Asn-28 carries N-linked (GlcNAc...) asparagine glycosylation. Residue His-46 participates in Cu cation binding. An intrachain disulfide couples Cys-59 to Cys-93. A glycan (N-linked (GlcNAc...) asparagine) is linked at Asn-60. Positions 87, 92, and 97 each coordinate Cu cation. A glycan (N-linked (GlcNAc...) asparagine) is linked at Asn-102.

This Toxicodendron vernicifluum (Japanese lacquer tree) protein is Stellacyanin.